The primary structure comprises 201 residues: Thylakoid membrane protein slr1796 (201 aa).

Residues 16 to 36 (FLIVSLAFAMLLLGIWGTLPF) traverse the membrane as a helical segment.

It is found in the cellular thylakoid membrane. This chain is Thylakoid membrane protein slr1796, found in Synechocystis sp. (strain ATCC 27184 / PCC 6803 / Kazusa).